We begin with the raw amino-acid sequence, 458 residues long: Plant UBX domain-containing protein 2 (458 aa).

A disordered region spans residues 1–103 (MDDVKDKLKG…APQDGFDPYG (103 aa)). Residues 44–54 (PIQNRFNSSQA) are compositionally biased toward polar residues. Pro residues predominate over residues 56–70 (NPTPRPKPNPNPLPE). A compositionally biased stretch (polar residues) spans 74–85 (SSSDQKISGSTR). The C2H2-type; atypical zinc-finger motif lies at 121 to 143 (FECPICKNPFTSEEEVSVHVESC). In terms of domain architecture, PUB spans 181 to 248 (SSIDVLLRLF…EIWAVMDVPS (68 aa)). The UBX domain occupies 349–433 (KRYKRSMIRV…ELVPSALIRF (85 aa)).

In terms of assembly, interacts with CDC48A in vitro and co-fractionates with membrane-associated but not soluble CDC48A in vivo.

It is found in the membrane. In terms of biological role, facilitates the interaction of SYP31 and CDC48A, thereby regulating an CDC48A membrane-associated function. Appears to act as a negative regulator mediating the powdery mildew-plant interaction. In Arabidopsis thaliana (Mouse-ear cress), this protein is Plant UBX domain-containing protein 2.